The sequence spans 198 residues: Transcription factor IND (198 aa).

The interval 1 to 33 (MENGMYKKKGVCDSCVSSKSRSNHSPKRSMMEP) is disordered. Residues 118-167 (ISDDPQTVVARRRRERISEKIRILKRIVPGGAKMDTASMLDEAIRYTKFL) form the bHLH domain.

As to quaternary structure, homodimer. Heterodimer; possibly with ALC. After fertilization, it is expressed in stripes about four cells wide at the margins of developing wild-type fruit. Also expressed in the inner valve layer, which becomes lignified later in fruit development. Detected in roots.

It localises to the nucleus. Transcription regulator required for seed dispersal. Involved in the differentiation of all three cell types required for fruit dehiscence. Acts as the key regulator in a network including SHP and ALC that controls specification of the valve margin. Works with ALC, SHP, and FUL to allow differentiation of the lignified valve layer, the spring-loaded mechanism of fruit that promotes opening. Regulates the expression of the YJ80 marker. This is Transcription factor IND (IND) from Arabidopsis thaliana (Mouse-ear cress).